Reading from the N-terminus, the 114-residue chain is MTRVKRGNIARNRRNEILDLAKGFRGSSSKLYRTAQQRTIKALTNSYKDRKNKKREFVKIWVSRINAAVRLSGLNYSSFQNQLKFHKIRLNRKICSQIALQDQESFTKLLDLII.

Belongs to the bacterial ribosomal protein bL20 family.

It localises to the plastid. In terms of biological role, binds directly to 23S ribosomal RNA and is necessary for the in vitro assembly process of the 50S ribosomal subunit. It is not involved in the protein synthesizing functions of that subunit. This is Large ribosomal subunit protein bL20c from Prototheca wickerhamii.